We begin with the raw amino-acid sequence, 214 residues long: Probable nicotinate-nucleotide adenylyltransferase (214 aa).

It belongs to the NadD family.

It catalyses the reaction nicotinate beta-D-ribonucleotide + ATP + H(+) = deamido-NAD(+) + diphosphate. It functions in the pathway cofactor biosynthesis; NAD(+) biosynthesis; deamido-NAD(+) from nicotinate D-ribonucleotide: step 1/1. In terms of biological role, catalyzes the reversible adenylation of nicotinate mononucleotide (NaMN) to nicotinic acid adenine dinucleotide (NaAD). The sequence is that of Probable nicotinate-nucleotide adenylyltransferase from Pelodictyon phaeoclathratiforme (strain DSM 5477 / BU-1).